The primary structure comprises 454 residues: MWRQGMFVLPFMTRLGVTNSWGGWTISGESTSNPGLWSYEGVAASHIILSGLLFLAAIWHWVFWDLELFRDPRTQQPALDLPKIFGIHLFLSGVLCFGFGAFHVTGLFGPGIWVSDPYGLTGAVEPVAPAWGAEGFDPYNPGGIAAHHIAAGIVGILAGLFHLSVRPPQRLYKALRMGNVETVLSSSIAAVFWAAFVVGGTMWYGCAATPIELFGPTRYQWDQGFFQQEIEKRVQTSVAGGASLSTAWSTIPEKLAFYDYIGNNPAKGGLFRSGPMDNGDGIAAGWLGHATFTDKNGRELFVRRMPTFFETFPVILIDGDGVVRADVPFRRAESKYSIEQVGVNVTFYGGELDGLTFTDPATVKKYARRAQLGEVFEFDRATLQSDGVFRSSPRAWFTFAHVSFALLFFFGHIWHGARTIFRDVFAGIDPDLDEQVEFGAFQKLGDVTTRRQAV.

6 consecutive transmembrane segments (helical) span residues 6–26 (MFVLPFMTRLGVTNSWGGWTI), 47–61 (IILSGLLFLAAIWHW), 86–102 (GIHLFLSGVLCFGFGAF), 149–164 (IAAGIVGILAGLFHLS), 183–198 (VLSSSIAAVFWAAFVV), and 403–418 (SFALLFFFGHIWHGAR).

It belongs to the PsbB/PsbC family. PsbB subfamily. In terms of assembly, PSII is composed of 1 copy each of membrane proteins PsbA, PsbB, PsbC, PsbD, PsbE, PsbF, PsbH, PsbI, PsbJ, PsbK, PsbL, PsbM, PsbT, PsbX, PsbY, PsbZ, Psb30/Ycf12, at least 3 peripheral proteins of the oxygen-evolving complex and a large number of cofactors. It forms dimeric complexes. Requires Binds multiple chlorophylls. PSII binds additional chlorophylls, carotenoids and specific lipids. as cofactor.

It localises to the plastid. The protein resides in the chloroplast thylakoid membrane. Functionally, one of the components of the core complex of photosystem II (PSII). It binds chlorophyll and helps catalyze the primary light-induced photochemical processes of PSII. PSII is a light-driven water:plastoquinone oxidoreductase, using light energy to abstract electrons from H(2)O, generating O(2) and a proton gradient subsequently used for ATP formation. The polypeptide is Photosystem II CP47 reaction center protein (Ostreococcus tauri).